The primary structure comprises 226 residues: Translation initiation factor 6 (226 aa).

This sequence belongs to the eIF-6 family.

Its function is as follows. Binds to the 50S ribosomal subunit and prevents its association with the 30S ribosomal subunit to form the 70S initiation complex. The chain is Translation initiation factor 6 from Haloquadratum walsbyi (strain DSM 16790 / HBSQ001).